Here is a 130-residue protein sequence, read N- to C-terminus: uncharacterized protein (130 aa).

This is an uncharacterized protein from Orgyia pseudotsugata multicapsid polyhedrosis virus (OpMNPV).